A 103-amino-acid polypeptide reads, in one-letter code: MYAVFQSGGKQHRVSEGQTIRLEKLDIATGETIEFDQVLMIANGEEINIGAPLVDGGKIKAEIIAHGRGEKIKIVKFRRRKHYRKQQGHRQWFTDVKITGISA.

The protein belongs to the bacterial ribosomal protein bL21 family. As to quaternary structure, part of the 50S ribosomal subunit. Contacts protein L20.

Functionally, this protein binds to 23S rRNA in the presence of protein L20. The sequence is that of Large ribosomal subunit protein bL21 from Yersinia pseudotuberculosis serotype O:1b (strain IP 31758).